A 181-amino-acid chain; its full sequence is ADP-ribosylation factor-like protein 1 (181 aa).

Gly2 carries N-myristoyl glycine lipidation. Residues 24–31, 45–48, Gly70, 126–129, and 160–161 each bind GTP; these read GLDGAGKT, TIPT, NKQD, and AT. Residues Thr31 and Thr48 each contribute to the Mg(2+) site.

It belongs to the small GTPase superfamily. Arf family. The GTP-bound form interacts with GOLGA1. The GTP-bound form interacts with GOLGA4 and RGPD8. The GTP-bound form directly interacts with ARFIP2. Binds to SCOC, preferentially in its GTP-bound form. May interact with UNC119. Interacts with ARFIP1; this interaction directs ARFIP1 to the trans-Golgi membranes. Interacts with ARFGEF1 (via N-terminus).

The protein resides in the golgi apparatus membrane. The protein localises to the golgi apparatus. Its subcellular location is the trans-Golgi network membrane. It is found in the membrane. Its function is as follows. GTP-binding protein that recruits several effectors, such as golgins, arfaptins and Arf-GEFs to the trans-Golgi network, and modulates their functions at the Golgi complex. Plays thereby a role in a wide range of fundamental cellular processes, including cell polarity, innate immunity, or protein secretion mediated by arfaptins, which were shown to play a role in maintaining insulin secretion from pancreatic beta cells. The sequence is that of ADP-ribosylation factor-like protein 1 (ARL1) from Bos taurus (Bovine).